We begin with the raw amino-acid sequence, 346 residues long: Methylthioribose-1-phosphate isomerase (346 aa).

Residues 47-49 (RGA), Arg-88, and Gln-195 each bind substrate. The active-site Proton donor is the Asp-236. 246 to 247 (NK) is a substrate binding site.

Belongs to the eIF-2B alpha/beta/delta subunits family. MtnA subfamily.

The enzyme catalyses 5-(methylsulfanyl)-alpha-D-ribose 1-phosphate = 5-(methylsulfanyl)-D-ribulose 1-phosphate. It functions in the pathway amino-acid biosynthesis; L-methionine biosynthesis via salvage pathway; L-methionine from S-methyl-5-thio-alpha-D-ribose 1-phosphate: step 1/6. Its function is as follows. Catalyzes the interconversion of methylthioribose-1-phosphate (MTR-1-P) into methylthioribulose-1-phosphate (MTRu-1-P). This Maridesulfovibrio salexigens (strain ATCC 14822 / DSM 2638 / NCIMB 8403 / VKM B-1763) (Desulfovibrio salexigens) protein is Methylthioribose-1-phosphate isomerase.